The primary structure comprises 64 residues: Large ribosomal subunit protein uL29 (64 aa).

The protein belongs to the universal ribosomal protein uL29 family.

This Legionella pneumophila (strain Lens) protein is Large ribosomal subunit protein uL29.